A 412-amino-acid polypeptide reads, in one-letter code: Multifunctional CCA protein (412 aa).

ATP-binding residues include glycine 8 and arginine 11. CTP contacts are provided by glycine 8 and arginine 11. Mg(2+) contacts are provided by aspartate 21 and aspartate 23. ATP is bound by residues arginine 91, arginine 137, and arginine 140. CTP is bound by residues arginine 91, arginine 137, and arginine 140. Residues 228 to 329 (TGIHTLMTLS…VKLFDSIDAW (102 aa)) enclose the HD domain.

This sequence belongs to the tRNA nucleotidyltransferase/poly(A) polymerase family. Bacterial CCA-adding enzyme type 1 subfamily. In terms of assembly, monomer. Can also form homodimers and oligomers. Requires Mg(2+) as cofactor. Ni(2+) is required as a cofactor.

It carries out the reaction a tRNA precursor + 2 CTP + ATP = a tRNA with a 3' CCA end + 3 diphosphate. The catalysed reaction is a tRNA with a 3' CCA end + 2 CTP + ATP = a tRNA with a 3' CCACCA end + 3 diphosphate. Its function is as follows. Catalyzes the addition and repair of the essential 3'-terminal CCA sequence in tRNAs without using a nucleic acid template. Adds these three nucleotides in the order of C, C, and A to the tRNA nucleotide-73, using CTP and ATP as substrates and producing inorganic pyrophosphate. tRNA 3'-terminal CCA addition is required both for tRNA processing and repair. Also involved in tRNA surveillance by mediating tandem CCA addition to generate a CCACCA at the 3' terminus of unstable tRNAs. While stable tRNAs receive only 3'-terminal CCA, unstable tRNAs are marked with CCACCA and rapidly degraded. The protein is Multifunctional CCA protein of Escherichia coli (strain SMS-3-5 / SECEC).